The primary structure comprises 441 residues: RUN domain-containing protein 3A (441 aa).

The segment at 1-293 (MEASFVQTTM…LQLQLEEAAA (293 aa)) is interaction with RAP2A. An RUN domain is found at 52–184 (DDSSEEFVNF…IDFSFCLKGE (133 aa)). Phosphothreonine is present on T210. Residues 211 to 234 (DEEERHSAESSTSEDNSPEHPYLP) are disordered. A Phosphoserine modification is found at S227. Residues 262–317 (YLEELVRLRESQLKDLEAENRRLQLQLEEAAAQNQREKRELEGVILELQEQLTGLI) are a coiled coil. Residues 367 to 379 (PLSAEASLSSDSQ) show a composition bias toward polar residues. The interval 367–399 (PLSAEASLSSDSQRLGEGKRDEEPWGPIGKDPT) is disordered. Over residues 380 to 389 (RLGEGKRDEE) the composition is skewed to basic and acidic residues. 2 positions are modified to phosphoserine: S411 and S414.

This sequence belongs to the RUNDC3 family. As to quaternary structure, interacts with the GTP-bound form of RAP2A.

Its function is as follows. May act as an effector of RAP2A in neuronal cells. In Bos taurus (Bovine), this protein is RUN domain-containing protein 3A (RUNDC3A).